Reading from the N-terminus, the 90-residue chain is Small ribosomal subunit protein uS15c (90 aa).

The protein belongs to the universal ribosomal protein uS15 family. In terms of assembly, part of the 30S ribosomal subunit.

Its subcellular location is the plastid. The protein resides in the chloroplast. The sequence is that of Small ribosomal subunit protein uS15c (rps15) from Populus alba (White poplar).